The following is a 144-amino-acid chain: MRLNTLSPAPGSKPSAKRVGRGIGSGLGKTCGRGHKGQKSRSGGSVRPGFEGGQMPLKQRLPKFGFTSRKSLVTAEVRLGELAKVEGDVIDLATLKTANLITKDIKFVKVVLSGEIARTVTVNGLRVTKGAKAAIEAAGGKIEE.

Residues 1–57 (MRLNTLSPAPGSKPSAKRVGRGIGSGLGKTCGRGHKGQKSRSGGSVRPGFEGGQMPL) are disordered. The segment covering 21–31 (RGIGSGLGKTC) has biased composition (gly residues).

This sequence belongs to the universal ribosomal protein uL15 family. In terms of assembly, part of the 50S ribosomal subunit.

In terms of biological role, binds to the 23S rRNA. The polypeptide is Large ribosomal subunit protein uL15 (Photobacterium profundum (strain SS9)).